A 153-amino-acid chain; its full sequence is Endoribonuclease YbeY (153 aa).

Residues H118, H122, and H128 each contribute to the Zn(2+) site.

This sequence belongs to the endoribonuclease YbeY family. Zn(2+) serves as cofactor.

Its subcellular location is the cytoplasm. In terms of biological role, single strand-specific metallo-endoribonuclease involved in late-stage 70S ribosome quality control and in maturation of the 3' terminus of the 16S rRNA. This is Endoribonuclease YbeY from Clostridioides difficile (strain 630) (Peptoclostridium difficile).